The sequence spans 28 residues: Ranatuerin-2LTa (28 aa).

The cysteines at positions 23 and 28 are disulfide-linked.

Expressed by the skin glands.

Its subcellular location is the secreted. In terms of biological role, has antibacterial activity. The chain is Ranatuerin-2LTa from Rana latastei (Italian agile frog).